A 224-amino-acid polypeptide reads, in one-letter code: Flagellar L-ring protein (224 aa).

Positions 1–15 (MARYLVLAVALLLAA) are cleaved as a signal peptide. A lipid anchor (N-palmitoyl cysteine) is attached at Cys16. A lipid anchor (S-diacylglycerol cysteine) is attached at Cys16.

The protein belongs to the FlgH family. As to quaternary structure, the basal body constitutes a major portion of the flagellar organelle and consists of four rings (L,P,S, and M) mounted on a central rod.

The protein resides in the cell outer membrane. It is found in the bacterial flagellum basal body. Functionally, assembles around the rod to form the L-ring and probably protects the motor/basal body from shearing forces during rotation. The chain is Flagellar L-ring protein from Shewanella baltica (strain OS223).